Reading from the N-terminus, the 293-residue chain is MITFSDLLLKLQTFWKEQGCLIVQPYDIPAGAGTFHPATLLRSLDSKPWSVAYVAPSRRPTDGRYGENPNRLGSYYQFQVIIKPSPDNIQELYLKSLEYLGLNLKEHDIRFVEDNWESPTLGAWGLGWEVWLDGMEVTQFTYFQQVGGIACDPVAVEITYGTERLAMYLQEVENVFDIEWSQGVSYADVHLEGEYEFSKYHFEVADTQRLLTLFEEAQGESKRCLEALLPLPAYDWTMLSSHMFNVLDARKAISATERQNYILKIRELAKGCAELYKGQEEEREARLARAKNR.

Belongs to the class-II aminoacyl-tRNA synthetase family. Tetramer of two alpha and two beta subunits.

The protein resides in the cytoplasm. The enzyme catalyses tRNA(Gly) + glycine + ATP = glycyl-tRNA(Gly) + AMP + diphosphate. In Wolinella succinogenes (strain ATCC 29543 / DSM 1740 / CCUG 13145 / JCM 31913 / LMG 7466 / NCTC 11488 / FDC 602W) (Vibrio succinogenes), this protein is Glycine--tRNA ligase alpha subunit.